Here is a 264-residue protein sequence, read N- to C-terminus: Shikimate dehydrogenase (NADP(+)) (264 aa).

Shikimate contacts are provided by residues serine 14–serine 16 and threonine 59. Lysine 63 serves as the catalytic Proton acceptor. Glutamate 75 provides a ligand contact to NADP(+). Asparagine 84 and aspartate 99 together coordinate shikimate. NADP(+) is bound by residues glycine 122–alanine 126, asparagine 144–lysine 149, and isoleucine 205. Tyrosine 207 contributes to the shikimate binding site. Position 228 (glycine 228) interacts with NADP(+).

This sequence belongs to the shikimate dehydrogenase family. In terms of assembly, homodimer.

The catalysed reaction is shikimate + NADP(+) = 3-dehydroshikimate + NADPH + H(+). Its pathway is metabolic intermediate biosynthesis; chorismate biosynthesis; chorismate from D-erythrose 4-phosphate and phosphoenolpyruvate: step 4/7. Functionally, involved in the biosynthesis of the chorismate, which leads to the biosynthesis of aromatic amino acids. Catalyzes the reversible NADPH linked reduction of 3-dehydroshikimate (DHSA) to yield shikimate (SA). This is Shikimate dehydrogenase (NADP(+)) from Pyrococcus abyssi (strain GE5 / Orsay).